Here is a 1826-residue protein sequence, read N- to C-terminus: Transcription initiation factor TFIID subunit 1-like (1826 aa).

3 disordered regions span residues Asp-118–Asp-141, Ile-532–Lys-555, and Arg-1252–Arg-1276. The span at Arg-1252–Lys-1268 shows a compositional bias: basic and acidic residues. The short motif at Pro-1370 to Val-1377 is the Nuclear localization signal element. Bromo domains are found at residues Arg-1395–Lys-1503 and Leu-1517–Tyr-1626. A disordered region spans residues Ala-1648–Lys-1826. Residues Pro-1660–Pro-1700 are compositionally biased toward polar residues. 3 stretches are compositionally biased toward acidic residues: residues Glu-1714 to Asp-1729, Gly-1740 to Gly-1750, and Glu-1768 to Asp-1783. Residues Ser-1787–Asp-1797 show a composition bias toward polar residues. Over residues Ser-1817 to Lys-1826 the composition is skewed to basic and acidic residues.

The protein belongs to the TAF1 family. Can bind directly to TATA-box binding protein (TBP). Interacts (via bromo domains) with acetylated lysine residues on the N-terminus of histone H1.4, H2A, H2B, H3 and H4 (in vitro). Testis specific, expressed apparently in germ cells.

Its subcellular location is the nucleus. In terms of biological role, may act as a functional substitute for TAF1/TAFII250 during male meiosis, when sex chromosomes are transcriptionally silenced. The sequence is that of Transcription initiation factor TFIID subunit 1-like (TAF1L) from Homo sapiens (Human).